We begin with the raw amino-acid sequence, 100 residues long: UPF0125 protein HD_1828 (100 aa).

This sequence belongs to the UPF0125 (RnfH) family.

The polypeptide is UPF0125 protein HD_1828 (Haemophilus ducreyi (strain 35000HP / ATCC 700724)).